The following is a 282-amino-acid chain: MPGVTSQSAGSKYDAIPGPLGLASASLMGKVALVTGAGRGIGREMAMELGRRGAKVIVNYANSAETAEEVVQAIKKSGSDAASIKANVSDVDQIVKMFGEAKQIWGRLDIVCSNSGVVSFGHVKDVTPEEFDRVFAINTRGQFFVAREAYKHLEVGGRLILMGSITGQAKGVPKHAVYSGSKGTIETFVRCMAIDFGDKKITVNAVAPGGIKTDMYRDVCREYIPNGGELDDEGVDEFAAGWSPMHRVGLPIDIARVVCFLASQDGEWINGKVLGIDGAACM.

Positions 41, 114, and 147 each coordinate NADP(+). Residues S164 and Y178 each act as proton donor in the active site. NADP(+)-binding residues include Y178, K182, I211, and T213. Residue K182 is the Lowers pKa of active site Tyr of the active site.

This sequence belongs to the short-chain dehydrogenases/reductases (SDR) family. In terms of assembly, homotetramer.

The protein operates within pigment biosynthesis; melanin biosynthesis. Its function is as follows. Catalyzes the NADPH-dependent reduction of 1,3,8-trihydroxynaphthalene (T3HN) into (-)-vermelone. Essential for appressorial penetration of colletotrichum lagenarium. In Colletotrichum orbiculare (strain 104-T / ATCC 96160 / CBS 514.97 / LARS 414 / MAFF 240422) (Cucumber anthracnose fungus), this protein is Trihydroxynaphthalene reductase (THR1).